The following is a 601-amino-acid chain: Probable inactive receptor kinase At1g27190 (601 aa).

Positions 1–24 are cleaved as a signal peptide; that stretch reads MKKIFITLLWLLFISSFLCSSSSA. Asn52 carries N-linked (GlcNAc...) asparagine glycosylation. LRR repeat units follow at residues 73-95, 97-119, 122-144, 146-169, and 170-192; these read RIIS…LKLC, SLQS…ICSW, YLVT…IVEC, FLNA…SRLD, and RLRR…LARF. The chain crosses the membrane as a helical span at residues 221–241; sequence IIIVAGVLGAVGSLCVGLVIF. Thr298 bears the Phosphothreonine mark. One can recognise a Protein kinase domain in the interval 301-586; it reads FSSGNIDVSS…KNMADKHGVS (286 aa). ATP is bound by residues 307-315 and Lys329; that span reads DVSSRTGVS. Position 383 is a phosphoserine (Ser383). Position 399 is a phosphothreonine (Thr399). The residue at position 476 (Tyr476) is a Phosphotyrosine. Position 478 is a phosphoserine (Ser478). Thr479 is modified (phosphothreonine). Residues Ser483 and Ser586 each carry the phosphoserine modification.

It belongs to the protein kinase superfamily. Ser/Thr protein kinase family.

The protein resides in the membrane. The chain is Probable inactive receptor kinase At1g27190 from Arabidopsis thaliana (Mouse-ear cress).